The chain runs to 90 residues: Small ribosomal subunit protein uS15 (90 aa).

This sequence belongs to the universal ribosomal protein uS15 family. As to quaternary structure, part of the 30S ribosomal subunit. Forms a bridge to the 50S subunit in the 70S ribosome, contacting the 23S rRNA.

One of the primary rRNA binding proteins, it binds directly to 16S rRNA where it helps nucleate assembly of the platform of the 30S subunit by binding and bridging several RNA helices of the 16S rRNA. Functionally, forms an intersubunit bridge (bridge B4) with the 23S rRNA of the 50S subunit in the ribosome. This Mycoplasmoides gallisepticum (strain R(low / passage 15 / clone 2)) (Mycoplasma gallisepticum) protein is Small ribosomal subunit protein uS15.